The following is a 433-amino-acid chain: MGLTDYCECRFSAGNGGNGIIAWRREAHYDKGGPGGGNGGNGGNVVLQADHNCDSLFFLKNKKHLFAESGGNGKPDLAHGKNGEDLVIKVPVGTTVRDLDTNQILMDFVHDQQSFILCYGGKGGKGNAAFKSPIMRAPNLYENGDKGQSLHVSLEIKYLANVGIVGFPNTGKSTLISKLSNAKPKIANYRFTTLVPVLGVVKHNDQSLVFADIPGLIENASEGSGLGHYFLRHIERCEILIHLISLDPVDHDDPCQAYEQIMRELSKYSQLLVKKKMLVVANKTDVDLDGTRFQKLAQYLENKGIPLFKISALKQELGDLVAQVFALHQKTLAQFGANKFHLPMEMEKHYVFEQASETDHDPLNIERDALGRWHVECKRLHYWFDKIPQTTLDNIRRLGNKIKEVGIEDQLKVAGAKKGDVIVFAGQEFVIND.

One can recognise an Obg domain in the interval 1–159 (MGLTDYCECR…LHVSLEIKYL (159 aa)). An OBG-type G domain is found at 160–329 (ANVGIVGFPN…LVAQVFALHQ (170 aa)). GTP is bound by residues 166-173 (GFPNTGKS), 191-195 (FTTLV), 212-215 (DIPG), 282-285 (NKTD), and 310-312 (ISA). The Mg(2+) site is built by S173 and T193. Positions 355-433 (ASETDHDPLN…FAGQEFVIND (79 aa)) constitute an OCT domain.

This sequence belongs to the TRAFAC class OBG-HflX-like GTPase superfamily. OBG GTPase family. Monomer. It depends on Mg(2+) as a cofactor.

The protein localises to the cytoplasm. In terms of biological role, an essential GTPase which binds GTP, GDP and possibly (p)ppGpp with moderate affinity, with high nucleotide exchange rates and a fairly low GTP hydrolysis rate. Plays a role in control of the cell cycle, stress response, ribosome biogenesis and in those bacteria that undergo differentiation, in morphogenesis control. The protein is GTPase Obg of Mycoplasma pneumoniae (strain ATCC 29342 / M129 / Subtype 1) (Mycoplasmoides pneumoniae).